Reading from the N-terminus, the 393-residue chain is Argininosuccinate synthase (393 aa).

ATP-binding positions include 7–15 and Ala-34; that span reads AYSGGLDTS. Residues Tyr-85 and Ser-90 each contribute to the L-citrulline site. Gly-115 contacts ATP. L-aspartate contacts are provided by Thr-117, Asn-121, and Asp-122. An L-citrulline-binding site is contributed by Asn-121. Arg-125, Ser-176, Ser-185, Glu-261, and Tyr-273 together coordinate L-citrulline.

The protein belongs to the argininosuccinate synthase family. Type 1 subfamily. As to quaternary structure, homotetramer.

It is found in the cytoplasm. It carries out the reaction L-citrulline + L-aspartate + ATP = 2-(N(omega)-L-arginino)succinate + AMP + diphosphate + H(+). It participates in amino-acid biosynthesis; L-arginine biosynthesis; L-arginine from L-ornithine and carbamoyl phosphate: step 2/3. The sequence is that of Argininosuccinate synthase from Ehrlichia canis (strain Jake).